The sequence spans 204 residues: Recombination protein RecR (204 aa).

The segment at 58-75 (CSICQNITDLGTDPCLLC) adopts a C4-type zinc-finger fold. Residues 83 to 181 (SVICVVESPT…NVTRIARGIP (99 aa)) enclose the Toprim domain.

Belongs to the RecR family.

May play a role in DNA repair. It seems to be involved in an RecBC-independent recombinational process of DNA repair. It may act with RecF and RecO. The chain is Recombination protein RecR from Chlorobaculum parvum (strain DSM 263 / NCIMB 8327) (Chlorobium vibrioforme subsp. thiosulfatophilum).